We begin with the raw amino-acid sequence, 545 residues long: CTP synthase (545 aa).

The interval 1–266 (MTTRYIFVTG…DELVVKRFGI (266 aa)) is amidoligase domain. A CTP-binding site is contributed by S14. A UTP-binding site is contributed by S14. ATP contacts are provided by residues 15-20 (SLGKGI) and D72. Mg(2+) is bound by residues D72 and E140. CTP-binding positions include 147–149 (DIE), 187–192 (KTKPTQ), and K223. Residues 187-192 (KTKPTQ) and K223 each bind UTP. Position 239 to 241 (239 to 241 (KDV)) interacts with ATP. Residues 291–542 (TIGMVGKYIE…VAAATAYQKR (252 aa)) form the Glutamine amidotransferase type-1 domain. G352 lines the L-glutamine pocket. The active-site Nucleophile; for glutamine hydrolysis is C379. L-glutamine contacts are provided by residues 380-383 (LGLQ), E403, and R470. Residues H515 and E517 contribute to the active site.

The protein belongs to the CTP synthase family. In terms of assembly, homotetramer.

The catalysed reaction is UTP + L-glutamine + ATP + H2O = CTP + L-glutamate + ADP + phosphate + 2 H(+). It catalyses the reaction L-glutamine + H2O = L-glutamate + NH4(+). It carries out the reaction UTP + NH4(+) + ATP = CTP + ADP + phosphate + 2 H(+). It functions in the pathway pyrimidine metabolism; CTP biosynthesis via de novo pathway; CTP from UDP: step 2/2. With respect to regulation, allosterically activated by GTP, when glutamine is the substrate; GTP has no effect on the reaction when ammonia is the substrate. The allosteric effector GTP functions by stabilizing the protein conformation that binds the tetrahedral intermediate(s) formed during glutamine hydrolysis. Inhibited by the product CTP, via allosteric rather than competitive inhibition. Functionally, catalyzes the ATP-dependent amination of UTP to CTP with either L-glutamine or ammonia as the source of nitrogen. Regulates intracellular CTP levels through interactions with the four ribonucleotide triphosphates. The polypeptide is CTP synthase (Shewanella sediminis (strain HAW-EB3)).